We begin with the raw amino-acid sequence, 475 residues long: Ribulose bisphosphate carboxylase large chain (475 aa).

Residues 1-2 constitute a propeptide that is removed on maturation; it reads MS. At proline 3 the chain carries N-acetylproline. Lysine 14 is subject to N6,N6,N6-trimethyllysine. Substrate contacts are provided by asparagine 123 and threonine 173. Residue lysine 175 is the Proton acceptor of the active site. Lysine 177 contacts substrate. Residues lysine 201, aspartate 203, and glutamate 204 each contribute to the Mg(2+) site. Lysine 201 carries the N6-carboxylysine modification. Residue histidine 294 is the Proton acceptor of the active site. Substrate-binding residues include arginine 295, histidine 327, and serine 379.

This sequence belongs to the RuBisCO large chain family. Type I subfamily. Heterohexadecamer of 8 large chains and 8 small chains; disulfide-linked. The disulfide link is formed within the large subunit homodimers. The cofactor is Mg(2+). Post-translationally, the disulfide bond which can form in the large chain dimeric partners within the hexadecamer appears to be associated with oxidative stress and protein turnover.

The protein resides in the plastid. Its subcellular location is the chloroplast. The catalysed reaction is 2 (2R)-3-phosphoglycerate + 2 H(+) = D-ribulose 1,5-bisphosphate + CO2 + H2O. It catalyses the reaction D-ribulose 1,5-bisphosphate + O2 = 2-phosphoglycolate + (2R)-3-phosphoglycerate + 2 H(+). Its function is as follows. RuBisCO catalyzes two reactions: the carboxylation of D-ribulose 1,5-bisphosphate, the primary event in carbon dioxide fixation, as well as the oxidative fragmentation of the pentose substrate in the photorespiration process. Both reactions occur simultaneously and in competition at the same active site. In Plumbago auriculata (Cape leadwort), this protein is Ribulose bisphosphate carboxylase large chain.